A 542-amino-acid chain; its full sequence is 2,3-bisphosphoglycerate-independent phosphoglycerate mutase (542 aa).

2 residues coordinate Mn(2+): aspartate 13 and serine 63. Serine 63 acts as the Phosphoserine intermediate in catalysis. Substrate contacts are provided by residues histidine 124, 154–155 (RD), arginine 186, arginine 192, 263–266 (RADR), and lysine 357. Mn(2+) contacts are provided by aspartate 424, histidine 428, aspartate 465, histidine 466, and histidine 484.

Belongs to the BPG-independent phosphoglycerate mutase family. In terms of assembly, monomer. The cofactor is Mn(2+).

The catalysed reaction is (2R)-2-phosphoglycerate = (2R)-3-phosphoglycerate. Its pathway is carbohydrate degradation; glycolysis; pyruvate from D-glyceraldehyde 3-phosphate: step 3/5. Its function is as follows. Catalyzes the interconversion of 2-phosphoglycerate and 3-phosphoglycerate. In Herpetosiphon aurantiacus (strain ATCC 23779 / DSM 785 / 114-95), this protein is 2,3-bisphosphoglycerate-independent phosphoglycerate mutase.